A 75-amino-acid polypeptide reads, in one-letter code: Movement protein TGBp3 (75 aa).

The Lumenal segment spans residues 1–2; that stretch reads MR. The chain crosses the membrane as a helical span at residues 3-23; that stretch reads VLDLILALITAAVVGYTIALV. At 24-75 the chain is on the cytoplasmic side; sequence SNSGCYVHFDGRSATTTCPPGPWVESIANGLYTAGLARPHPEPECERRQSSW.

This sequence belongs to the Tymovirales TGBp3 protein family.

Its subcellular location is the host endoplasmic reticulum membrane. Its function is as follows. Plays a role in viral cell-to-cell propagation, by facilitating genome transport to neighboring plant cells through plasmosdesmata. May induce the formation of granular vesicles derived from the Endoplasmic reticulum, which align on actin filaments. The sequence is that of Movement protein TGBp3 from Strawberry mild yellow edge-associated virus (SMYEaV).